A 20-amino-acid polypeptide reads, in one-letter code: Fibrinogen beta chain (20 aa).

The segment at 1-20 (ATDYEDEEFPGAVPPSVGAR) is disordered. The O-linked (GalNAc...) threonine glycan is linked to Thr-2. Sulfotyrosine is present on Tyr-4.

In terms of assembly, heterohexamer; disulfide linked. Contains 2 sets of 3 non-identical chains (alpha, beta and gamma). The 2 heterotrimers are in head to head conformation with the N-termini in a small central domain. Post-translationally, conversion of fibrinogen to fibrin is triggered by thrombin, which cleaves fibrinopeptides A and B from alpha and beta chains, and thus exposes the N-terminal polymerization sites responsible for the formation of the soft clot.

Its subcellular location is the secreted. In terms of biological role, cleaved by the protease thrombin to yield monomers which, together with fibrinogen alpha (FGA) and fibrinogen gamma (FGG), polymerize to form an insoluble fibrin matrix. Fibrin has a major function in hemostasis as one of the primary components of blood clots. In addition, functions during the early stages of wound repair to stabilize the lesion and guide cell migration during re-epithelialization. Was originally thought to be essential for platelet aggregation, based on in vitro studies using anticoagulated blood. However subsequent studies have shown that it is not absolutely required for thrombus formation in vivo. Enhances expression of SELP in activated platelets. Maternal fibrinogen is essential for successful pregnancy. Fibrin deposition is also associated with infection, where it protects against IFNG-mediated hemorrhage. May also facilitate the antibacterial immune response via both innate and T-cell mediated pathways. In Elephas maximus (Indian elephant), this protein is Fibrinogen beta chain (FGB).